We begin with the raw amino-acid sequence, 184 residues long: Cyclin-dependent kinase inhibitor 1 (184 aa).

Residues 85 to 98 (ISSTTLTPLSSPST) are compositionally biased toward low complexity. Residues 85 to 184 (ISSTTLTPLS…IRTRSSCSPY (100 aa)) are disordered.

The protein belongs to the CDI family. Interacts with cyd-1; the interaction is direct. As to expression, in embryos, expression is first seen in pharyngeal primordium and later in all differentiating cells. Post embryonic expression corresponds to developmental patterns of cell cycle progression in many tissues including sex myoblasts, distal tip cells, vulval cells, seam cells, neurons, intestine cells and hypodermal cells.

The protein localises to the nucleus. In terms of biological role, negative cell-cycle regulator that functions at the G1-to-S-phase transition. Required for suspension of the cell cycle in dauer larvae and starved L1 larvae. In vulval precursor cells (VPCs), a pathway of heterochronic genes acts via cki-1 to maintain VPCs in G1 during the L2 larval stage. Cul-2 may function in ubiquitin-mediated degradation by targeting cki-1 for degradation. Involved in distal tip cell development by repressing and modulating cye-1/cdk-2 activity levels in Z1.aa/Z4.pp and in Z1.ap/Z4.pa. The polypeptide is Cyclin-dependent kinase inhibitor 1 (Caenorhabditis elegans).